A 133-amino-acid chain; its full sequence is Holo-[acyl-carrier-protein] synthase (133 aa).

Asp8 and Glu56 together coordinate Mg(2+).

This sequence belongs to the P-Pant transferase superfamily. AcpS family. The cofactor is Mg(2+).

It is found in the cytoplasm. It carries out the reaction apo-[ACP] + CoA = holo-[ACP] + adenosine 3',5'-bisphosphate + H(+). Transfers the 4'-phosphopantetheine moiety from coenzyme A to a Ser of acyl-carrier-protein. This Clostridium perfringens (strain SM101 / Type A) protein is Holo-[acyl-carrier-protein] synthase.